Here is a 170-residue protein sequence, read N- to C-terminus: MRRGFYIGRFQPYHMGHHLVLEQISREVDEIIVGIGTAQISHTVTDPFTAGERIAMIYGALRELGRWFYIIPLPDINRNAVWVSHVKSMTPPFEVVYSNNPLVVELFMEAGMEVRRPPMYRREVYSGTVIRRLMIEGGDWRQLVPDAVAKVIDEIKGVERLRNISKKDFA.

This sequence belongs to the archaeal NMN adenylyltransferase family.

It localises to the cytoplasm. It catalyses the reaction beta-nicotinamide D-ribonucleotide + ATP + H(+) = diphosphate + NAD(+). It functions in the pathway cofactor biosynthesis; NAD(+) biosynthesis; NAD(+) from nicotinamide D-ribonucleotide: step 1/1. The polypeptide is Nicotinamide-nucleotide adenylyltransferase (Methanothrix thermoacetophila (strain DSM 6194 / JCM 14653 / NBRC 101360 / PT) (Methanosaeta thermophila)).